The primary structure comprises 87 residues: Small ribosomal subunit protein bS21m (87 aa).

It belongs to the bacterial ribosomal protein bS21 family. Component of the mitochondrial ribosome small subunit (28S) which comprises a 12S rRNA and about 30 distinct proteins.

It localises to the mitochondrion. This Mus musculus (Mouse) protein is Small ribosomal subunit protein bS21m (Mrps21).